The chain runs to 181 residues: 6,7-dimethyl-8-ribityllumazine synthase (181 aa).

5-amino-6-(D-ribitylamino)uracil-binding positions include Phe23, 61–63 (SFE), and 85–87 (AVI). 90-91 (QT) serves as a coordination point for (2S)-2-hydroxy-3-oxobutyl phosphate. His93 serves as the catalytic Proton donor. Phe118 serves as a coordination point for 5-amino-6-(D-ribitylamino)uracil. Arg132 lines the (2S)-2-hydroxy-3-oxobutyl phosphate pocket.

Belongs to the DMRL synthase family.

It catalyses the reaction (2S)-2-hydroxy-3-oxobutyl phosphate + 5-amino-6-(D-ribitylamino)uracil = 6,7-dimethyl-8-(1-D-ribityl)lumazine + phosphate + 2 H2O + H(+). The protein operates within cofactor biosynthesis; riboflavin biosynthesis; riboflavin from 2-hydroxy-3-oxobutyl phosphate and 5-amino-6-(D-ribitylamino)uracil: step 1/2. Catalyzes the formation of 6,7-dimethyl-8-ribityllumazine by condensation of 5-amino-6-(D-ribitylamino)uracil with 3,4-dihydroxy-2-butanone 4-phosphate. This is the penultimate step in the biosynthesis of riboflavin. This Synechococcus elongatus (strain ATCC 33912 / PCC 7942 / FACHB-805) (Anacystis nidulans R2) protein is 6,7-dimethyl-8-ribityllumazine synthase.